The following is a 153-amino-acid chain: Ribosome-binding factor A (153 aa).

A disordered region spans residues Asp-116–Val-153. The segment covering Val-119 to Glu-132 has biased composition (low complexity).

Belongs to the RbfA family. In terms of assembly, monomer. Binds 30S ribosomal subunits, but not 50S ribosomal subunits or 70S ribosomes.

It localises to the cytoplasm. Functionally, one of several proteins that assist in the late maturation steps of the functional core of the 30S ribosomal subunit. Associates with free 30S ribosomal subunits (but not with 30S subunits that are part of 70S ribosomes or polysomes). Required for efficient processing of 16S rRNA. May interact with the 5'-terminal helix region of 16S rRNA. The polypeptide is Ribosome-binding factor A (Kocuria rhizophila (strain ATCC 9341 / DSM 348 / NBRC 103217 / DC2201)).